Here is a 993-residue protein sequence, read N- to C-terminus: Isoleucine--tRNA ligase, mitochondrial (993 aa).

A mitochondrion-targeting transit peptide spans 1 to 29; the sequence is SLWGTPRLPCSPGWQGATKRLLVRSVSGA. An N6-acetyllysine; alternate modification is found at K55. K55 bears the N6-succinyllysine; alternate mark. The 'HIGH' region motif lies at 97–107; that stretch reads PYANGDPHVGH. K170 carries the post-translational modification N6-acetyllysine. The residue at position 175 (K175) is an N6-succinyllysine. K214 bears the N6-acetyllysine mark. Position 222 is an N6-acetyllysine; alternate (K222). Residue K222 is modified to N6-succinyllysine; alternate. N6-succinyllysine is present on residues K460 and K481. ATP is bound by residues K645 and K648. The 'KMSKS' region motif lies at 645–649; that stretch reads KMSKS. An N6-acetyllysine modification is found at K706. N6-acetyllysine; alternate is present on residues K756 and K762. An N6-succinyllysine; alternate mark is found at K756 and K762.

Belongs to the class-I aminoacyl-tRNA synthetase family.

The protein localises to the mitochondrion matrix. It catalyses the reaction tRNA(Ile) + L-isoleucine + ATP = L-isoleucyl-tRNA(Ile) + AMP + diphosphate. Functionally, aminoacyl-tRNA synthetase that catalyzes the specific attachment of isoleucine to its cognate tRNA (tRNA(Ile)). The chain is Isoleucine--tRNA ligase, mitochondrial (IARS2) from Macaca fascicularis (Crab-eating macaque).